A 370-amino-acid chain; its full sequence is GTPase Obg (370 aa).

One can recognise an Obg domain in the interval 1–159 (MKFIDEARIE…RMLKLELKVL (159 aa)). The disordered stretch occupies residues 128 to 147 (LHFKSSTNRAPRQKTDGKPG). One can recognise an OBG-type G domain in the interval 160 to 334 (ADVGLLGMPN…LCYAIYDYLS (175 aa)). Residues 166–173 (GMPNAGKS), 191–195 (FTTLA), 213–216 (DIPG), 284–287 (NKLD), and 315–317 (SAL) each bind GTP. Mg(2+) contacts are provided by serine 173 and threonine 193.

This sequence belongs to the TRAFAC class OBG-HflX-like GTPase superfamily. OBG GTPase family. Monomer. Mg(2+) serves as cofactor.

The protein resides in the cytoplasm. In terms of biological role, an essential GTPase which binds GTP, GDP and possibly (p)ppGpp with moderate affinity, with high nucleotide exchange rates and a fairly low GTP hydrolysis rate. Plays a role in control of the cell cycle, stress response, ribosome biogenesis and in those bacteria that undergo differentiation, in morphogenesis control. This chain is GTPase Obg, found in Burkholderia cenocepacia (strain ATCC BAA-245 / DSM 16553 / LMG 16656 / NCTC 13227 / J2315 / CF5610) (Burkholderia cepacia (strain J2315)).